A 1200-amino-acid chain; its full sequence is Chromosome partition protein Smc (1200 aa).

32-39 contributes to the ATP binding site; that stretch reads PNGCGKSN. 2 coiled-coil regions span residues 171 to 219 and 252 to 342; these read VTKY…AEKY and LENL…MSEA. Residues 528–644 enclose the SMC hinge domain; the sequence is QGIFGLVADV…QDVATARAWT (117 aa). Coiled-coil stretches lie at residues 679 to 706 and 735 to 762; these read ALQKKREIAELATEVARVEERYNEILTR and LASQEKDLHKAGEDLARVRERVRALEVE. The interval 763–795 is disordered; it reads EGQLTQSHQALEHEEEASRGEVAHGQADREGRE. Over residues 772-795 the composition is skewed to basic and acidic residues; sequence ALEHEEEASRGEVAHGQADREGRE. Positions 1002 to 1039 form a coiled coil; that stretch reads HAELSKRYDFLTAQKKDLQSSIEQLKEAIQRIDATSRE.

Belongs to the SMC family. As to quaternary structure, homodimer. Probably forms the Structural Maintenance of Chromosome (SMC) condensin-like complex with ScpA and ScpB.

The protein localises to the cytoplasm. A conditionally essential component of the chromosome segregation machinery. Required for chromosome condensation and partitioning. Important for positioning of ParB-parS complexes (ori of replication) and of the ter replication site, as well as for segration of the ParB-parS complex and thus chromosome segregation. May act via the formation of a condensin-like complex containing Smc, ScpA and ScpB that pulls DNA away from mid-cell into both cell halves. This chain is Chromosome partition protein Smc, found in Myxococcus xanthus (strain DK1622).